The following is a 225-amino-acid chain: MASVEQPNKPKLKLYSYFRSSCSFRVRIALNLKGLDYEYVPVNLLKGEQFTPEFLKINPIGYVPALVDGEDVISDSFAILMYLEEKYPEHPILPADIHKKAINYQAANIVSSSIQPLQNLAVLNFIGEKVSPDEKVPWVQRHISKGFAALEKLLQGHAGRFATGDEVYLADLFLEPQIHAAITRFNVDMTQFPLLLRLHEAYSQLPEFQNAMPDKQPDSTSPTAS.

One can recognise a GST N-terminal domain in the interval 10–91 (PKLKLYSYFR…YLEEKYPEHP (82 aa)). Glutathione-binding positions include 20–25 (SSCSFR), Q49, V63, 75–76 (DS), Q115, and 119–121 (NLA). A GST C-terminal domain is found at 96-221 (DIHKKAINYQ…MPDKQPDSTS (126 aa)).

Belongs to the GST superfamily. Zeta family.

The protein localises to the cytoplasm. It catalyses the reaction RX + glutathione = an S-substituted glutathione + a halide anion + H(+). This is Glutathione S-transferase zeta class from Euphorbia esula (Leafy spurge).